A 118-amino-acid polypeptide reads, in one-letter code: Large ribosomal subunit protein uL18 (118 aa).

The protein belongs to the universal ribosomal protein uL18 family. Part of the 50S ribosomal subunit; part of the 5S rRNA/L5/L18/L25 subcomplex. Contacts the 5S and 23S rRNAs.

Functionally, this is one of the proteins that bind and probably mediate the attachment of the 5S RNA into the large ribosomal subunit, where it forms part of the central protuberance. The chain is Large ribosomal subunit protein uL18 from Mycoplasmopsis pulmonis (strain UAB CTIP) (Mycoplasma pulmonis).